The primary structure comprises 354 residues: Selenide, water dikinase (354 aa).

Cys23 is a catalytic residue. ATP-binding positions include Lys26 and 54–56 (TSD). Asp57 provides a ligand contact to Mg(2+). Residues Asp74, Asp97, and 145 to 147 (GHS) contribute to the ATP site. Asp97 provides a ligand contact to Mg(2+). Residue Asp233 coordinates Mg(2+).

It belongs to the selenophosphate synthase 1 family. Class I subfamily. As to quaternary structure, homodimer. Mg(2+) is required as a cofactor.

It catalyses the reaction hydrogenselenide + ATP + H2O = selenophosphate + AMP + phosphate + 2 H(+). In terms of biological role, synthesizes selenophosphate from selenide and ATP. The polypeptide is Selenide, water dikinase (Burkholderia ambifaria (strain MC40-6)).